We begin with the raw amino-acid sequence, 145 residues long: Protein SprT-like (145 aa).

In terms of domain architecture, SprT-like spans 5–140 (DYVREVSLAD…ACGRCHGRLI (136 aa)). His64 serves as a coordination point for Zn(2+). Glu65 is an active-site residue. His68 contributes to the Zn(2+) binding site.

It belongs to the SprT family. It depends on Zn(2+) as a cofactor.

The protein resides in the cytoplasm. The chain is Protein SprT-like from Streptococcus equi subsp. zooepidemicus (strain MGCS10565).